Consider the following 218-residue polypeptide: Thiopurine S-methyltransferase (218 aa).

S-adenosyl-L-methionine contacts are provided by W10, L45, E66, and R123.

It belongs to the class I-like SAM-binding methyltransferase superfamily. TPMT family.

The protein resides in the cytoplasm. It carries out the reaction S-adenosyl-L-methionine + a thiopurine = S-adenosyl-L-homocysteine + a thiopurine S-methylether.. The protein is Thiopurine S-methyltransferase of Shewanella sp. (strain ANA-3).